The primary structure comprises 153 residues: ATP synthase subunit b' (153 aa).

A helical transmembrane segment spans residues 23–40; sequence LMAIQVVALTYILNSLFF.

This sequence belongs to the ATPase B chain family. As to quaternary structure, F-type ATPases have 2 components, F(1) - the catalytic core - and F(0) - the membrane proton channel. F(1) has five subunits: alpha(3), beta(3), gamma(1), delta(1), epsilon(1). F(0) has four main subunits: a(1), b(1), b'(1) and c(10-14). The alpha and beta chains form an alternating ring which encloses part of the gamma chain. F(1) is attached to F(0) by a central stalk formed by the gamma and epsilon chains, while a peripheral stalk is formed by the delta, b and b' chains.

It is found in the cellular thylakoid membrane. Functionally, f(1)F(0) ATP synthase produces ATP from ADP in the presence of a proton or sodium gradient. F-type ATPases consist of two structural domains, F(1) containing the extramembraneous catalytic core and F(0) containing the membrane proton channel, linked together by a central stalk and a peripheral stalk. During catalysis, ATP synthesis in the catalytic domain of F(1) is coupled via a rotary mechanism of the central stalk subunits to proton translocation. In terms of biological role, component of the F(0) channel, it forms part of the peripheral stalk, linking F(1) to F(0). The b'-subunit is a diverged and duplicated form of b found in plants and photosynthetic bacteria. This Prochlorococcus marinus (strain MIT 9301) protein is ATP synthase subunit b'.